We begin with the raw amino-acid sequence, 627 residues long: MSVISIVPLASKSCLYKSLMSSTHELKALCRPIVTLGMCRRGKSVMASMSTGLTTAVSDDGVQRRIGDHHSNLWDDNFIQSLSSPYRASSYGETTNKLIGEVKEIFNSLSMADGGLMSPVDDLLQHLSMVDNVERLGIDRHFQTEIKVSLDYVYSYWSEKGIGSGRDIVCTDLNTTALGFRILRLHGYTVFPDVFEHLKDQMGRIACSANHTERQISSILNLFRASLIAFPGEKVMEEAEIFSATYLKEALQTIPVSSLSQEIQYVLQYRWHSNLPRLEARTYIDILQENTKNQMLDVNTEKVLELAKLEFNIFHSLQQNELKSVSRWWKDSGFPDLNFIRHRHVEFYTLVSGIDMEPKHSTFRLSFVKMCHLITVLDDMYDTFGTIDELRLFTAAVKRWDPSTTQCLPEYMKGVYIVLYETVNEMAKEAQKSQGRDTLNYVRQALEAYIGAYHKEAEWISTGYLPTFDEYFENGKASSGHRIATLQPTFMLDIPFPHHILQEIDFPSKFNDFACSILRLRGDTRCYQADMARGEEASCISCYMKDNPGSTQEDALNHINNMIEETIKKLNRELLKPDNNVPISSKKHAFDISRGLHHFYNYRDGYTVASNETKNLVIKTVLEPVPM.

The N-terminal 36 residues, 1 to 36, are a transit peptide targeting the chloroplast; it reads MSVISIVPLASKSCLYKSLMSSTHELKALCRPIVTL. Positions 378, 382, and 530 each coordinate Mg(2+). The DDXXD motif motif lies at 378–382; the sequence is DDMYD.

The protein belongs to the terpene synthase family. Tpsd subfamily. Mg(2+) serves as cofactor. Requires Mn(2+) as cofactor.

It localises to the plastid. The protein localises to the chloroplast. It catalyses the reaction (2E)-geranyl diphosphate = (+)-car-3-ene + diphosphate. Its pathway is terpene metabolism; oleoresin biosynthesis. Its function is as follows. Terpene synthase (TPS) involved in defensive oleoresin formation in conifers in response to insect attack (e.g. white pine weevil P.strobi) or other injury. The chain is Carene synthase 2, chloroplastic (TPS-3car2) from Picea sitchensis (Sitka spruce).